We begin with the raw amino-acid sequence, 136 residues long: Small ribosomal subunit protein eS6 (136 aa).

It belongs to the eukaryotic ribosomal protein eS6 family.

The chain is Small ribosomal subunit protein eS6 from Methanosarcina mazei (strain ATCC BAA-159 / DSM 3647 / Goe1 / Go1 / JCM 11833 / OCM 88) (Methanosarcina frisia).